The sequence spans 53 residues: ATP synthase protein 8 (53 aa).

A helical transmembrane segment spans residues 4 to 24 (MAPISWLLLFIVFSITFILFC).

This sequence belongs to the ATPase protein 8 family. In terms of assembly, F-type ATPases have 2 components, CF(1) - the catalytic core - and CF(0) - the membrane proton channel.

It localises to the mitochondrion membrane. Its function is as follows. Mitochondrial membrane ATP synthase (F(1)F(0) ATP synthase or Complex V) produces ATP from ADP in the presence of a proton gradient across the membrane which is generated by electron transport complexes of the respiratory chain. F-type ATPases consist of two structural domains, F(1) - containing the extramembraneous catalytic core and F(0) - containing the membrane proton channel, linked together by a central stalk and a peripheral stalk. During catalysis, ATP synthesis in the catalytic domain of F(1) is coupled via a rotary mechanism of the central stalk subunits to proton translocation. Part of the complex F(0) domain. Minor subunit located with subunit a in the membrane. In Drosophila yakuba (Fruit fly), this protein is ATP synthase protein 8 (mt:ATPase8).